The primary structure comprises 100 residues: Large ribosomal subunit protein uL23 (100 aa).

This sequence belongs to the universal ribosomal protein uL23 family. As to quaternary structure, part of the 50S ribosomal subunit. Contacts protein L29, and trigger factor when it is bound to the ribosome.

One of the early assembly proteins it binds 23S rRNA. One of the proteins that surrounds the polypeptide exit tunnel on the outside of the ribosome. Forms the main docking site for trigger factor binding to the ribosome. This is Large ribosomal subunit protein uL23 from Bradyrhizobium diazoefficiens (strain JCM 10833 / BCRC 13528 / IAM 13628 / NBRC 14792 / USDA 110).